Reading from the N-terminus, the 259-residue chain is Putative carbamate hydrolase RutD (259 aa).

This sequence belongs to the AB hydrolase superfamily. Hydrolase RutD family.

It catalyses the reaction carbamate + 2 H(+) = NH4(+) + CO2. Its function is as follows. Involved in pyrimidine catabolism. May facilitate the hydrolysis of carbamate, a reaction that can also occur spontaneously. The polypeptide is Putative carbamate hydrolase RutD (Pseudomonas savastanoi pv. phaseolicola (strain 1448A / Race 6) (Pseudomonas syringae pv. phaseolicola (strain 1448A / Race 6))).